We begin with the raw amino-acid sequence, 230 residues long: Sugar fermentation stimulation protein homolog (230 aa).

This sequence belongs to the SfsA family.

In Clostridium perfringens (strain 13 / Type A), this protein is Sugar fermentation stimulation protein homolog.